Reading from the N-terminus, the 422-residue chain is Kynurenine--oxoglutarate transaminase 1 (422 aa).

Substrate-binding residues include G36 and N185. An N6-(pyridoxal phosphate)lysine modification is found at K247. R398 contacts substrate.

This sequence belongs to the class-I pyridoxal-phosphate-dependent aminotransferase family. Homodimer. The cofactor is pyridoxal 5'-phosphate.

Its subcellular location is the cytoplasm. It localises to the cytosol. The enzyme catalyses L-kynurenine + 2-oxoglutarate = kynurenate + L-glutamate + H2O. It catalyses the reaction 3-phenylpyruvate + L-glutamine = 2-oxoglutaramate + L-phenylalanine. It carries out the reaction an S-substituted L-cysteine + H2O = a thiol + pyruvate + NH4(+). It functions in the pathway amino-acid degradation; L-kynurenine degradation; kynurenate from L-kynurenine: step 1/2. With respect to regulation, inhibited by tryptophan, indole-3-pyruvic acid, 3-indolepropionic acid, DL-indole-3-lactic acid, indole-3-acetic acid (IAC), amino-oxyacetate (AOAA), aminooxy-phenylpropionic acid (AOPP) and Tris. Its function is as follows. Catalyzes the irreversible transamination of the L-tryptophan metabolite L-kynurenine to form kynurenic acid (KA), an intermediate in the tryptophan catabolic pathway which is also a broad spectrum antagonist of the three ionotropic excitatory amino acid receptors among others. Also metabolizes the cysteine conjugates of certain halogenated alkenes and alkanes to form reactive metabolites. Catalyzes the beta-elimination of S-conjugates and Se-conjugates of L-(seleno)cysteine, resulting in the cleavage of the C-S or C-Se bond. The protein is Kynurenine--oxoglutarate transaminase 1 of Homo sapiens (Human).